The following is a 379-amino-acid chain: Protein FAM53B (379 aa).

Disordered regions lie at residues 206–257 and 302–348; these read CPAE…HKQR and AQND…AGKE. Residues 212 to 236 are compositionally biased toward polar residues; it reads SPESTPELQRRSGQSGLARSRSQPC. Positions 239–249 are enriched in basic residues; that stretch reads NHQKIGVKRRR. The Nuclear localization signal signature appears at 246 to 249; that stretch reads KRRR. A compositionally biased stretch (polar residues) spans 326–342; sequence QSDSSSADALIHQSESS.

Belongs to the FAM53 family. In terms of assembly, interacts with ctnnb1. As to expression, mainly expressed in proliferating tissues.

Its subcellular location is the nucleus. Functionally, acts as a regulator of Wnt signaling pathway by regulating beta-catenin (ctnnb1) nuclear localization. Required for appendage regeneration by regulating cell proliferation. The polypeptide is Protein FAM53B (Danio rerio (Zebrafish)).